The chain runs to 192 residues: uncharacterized protein (192 aa).

The Nudix hydrolase domain maps to 29-160; the sequence is HRQAAVLIPI…PLDIYRRGDS (132 aa). A Nudix box motif is present at residues 67-89; the sequence is GAVDDTDASVIAAALREAEEEVA. Residues glutamate 83 and glutamate 87 each contribute to the Mg(2+) site.

This sequence belongs to the Nudix hydrolase family. PCD1 subfamily. Mn(2+) is required as a cofactor. The cofactor is Mg(2+).

Its function is as follows. Probably mediates the hydrolysis of some nucleoside diphosphate derivatives. This is an uncharacterized protein from Shigella sonnei (strain Ss046).